Reading from the N-terminus, the 384-residue chain is Formate dehydrogenase, chloroplastic/mitochondrial (384 aa).

Residues 1-29 (MAMRQAAKATIRACSSSSSSGYFARRQFN) constitute a chloroplast and mitochondrion transit peptide. Residues I128 and N152 each coordinate substrate. NAD(+)-binding positions include 207-208 (RI), D227, 262-266 (PLTEK), N288, D314, and 338-341 (HTSG).

Belongs to the D-isomer specific 2-hydroxyacid dehydrogenase family. FDH subfamily. Homodimer.

It is found in the mitochondrion. The protein localises to the plastid. The protein resides in the chloroplast. It catalyses the reaction formate + NAD(+) = CO2 + NADH. Its function is as follows. Catalyzes the NAD(+)-dependent oxidation of formate to carbon dioxide. Involved in the cell stress response. In Arabidopsis thaliana (Mouse-ear cress), this protein is Formate dehydrogenase, chloroplastic/mitochondrial (FDH1).